Consider the following 395-residue polypeptide: Tyrosine--tRNA ligase (395 aa).

The 'HIGH' region signature appears at 42-51 (PTAPDIHLGH). A 'KMSKS' region motif is present at residues 226-230 (KMSKS). Lys-229 serves as a coordination point for ATP. The S4 RNA-binding domain occupies 334–394 (IAISNLLKDA…GKRKFARITL (61 aa)).

The protein belongs to the class-I aminoacyl-tRNA synthetase family. TyrS type 2 subfamily. Homodimer.

The protein resides in the cytoplasm. It catalyses the reaction tRNA(Tyr) + L-tyrosine + ATP = L-tyrosyl-tRNA(Tyr) + AMP + diphosphate + H(+). Functionally, catalyzes the attachment of tyrosine to tRNA(Tyr) in a two-step reaction: tyrosine is first activated by ATP to form Tyr-AMP and then transferred to the acceptor end of tRNA(Tyr). The sequence is that of Tyrosine--tRNA ligase from Photobacterium profundum (strain SS9).